A 248-amino-acid polypeptide reads, in one-letter code: Ureidoacrylate amidohydrolase RutB (248 aa).

The Proton acceptor role is filled by Asp-41. Residue Lys-150 is part of the active site. Cys-183 serves as the catalytic Nucleophile.

The protein belongs to the isochorismatase family. RutB subfamily.

The catalysed reaction is (Z)-3-ureidoacrylate + H2O + H(+) = (Z)-3-aminoacrylate + NH4(+) + CO2. It carries out the reaction (Z)-3-ureidoacrylate + H2O = (Z)-3-aminoacrylate + carbamate + H(+). It catalyses the reaction (Z)-2-methylureidoacrylate + H2O + H(+) = (Z)-2-methylaminoacrylate + NH4(+) + CO2. Its function is as follows. Hydrolyzes ureidoacrylate to form aminoacrylate and carbamate. The carbamate hydrolyzes spontaneously, thereby releasing one of the nitrogen atoms of the pyrimidine ring as ammonia and one of its carbon atoms as CO2. This Methylorubrum extorquens (strain ATCC 14718 / DSM 1338 / JCM 2805 / NCIMB 9133 / AM1) (Methylobacterium extorquens) protein is Ureidoacrylate amidohydrolase RutB.